Reading from the N-terminus, the 192-residue chain is Leucine-rich repeat-containing protein 51 (192 aa).

LRR repeat units follow at residues 50 to 71 (MTQSLWLNNNVLTDLRDFNHAV), 80 to 101 (NLAWIDLSFNDLTSIDPVLTTF), and 103 to 124 (NLSVLYLHGNSIQRLGEVNKLA). An LRRCT domain is found at 137-175 (NPIEEEKGYRQYVLCTLPHITTFDFSGVTKADRTTAEVW).

It is found in the cytoplasm. The protein is Leucine-rich repeat-containing protein 51 of Bos taurus (Bovine).